Consider the following 120-residue polypeptide: NAD(P)H-quinone oxidoreductase subunit 3, chloroplastic (120 aa).

3 consecutive transmembrane segments (helical) span residues Ile-9–Gly-29, Met-64–Met-84, and Val-88–Leu-108.

Belongs to the complex I subunit 3 family. In terms of assembly, NDH is composed of at least 16 different subunits, 5 of which are encoded in the nucleus.

The protein resides in the plastid. It is found in the chloroplast thylakoid membrane. It catalyses the reaction a plastoquinone + NADH + (n+1) H(+)(in) = a plastoquinol + NAD(+) + n H(+)(out). It carries out the reaction a plastoquinone + NADPH + (n+1) H(+)(in) = a plastoquinol + NADP(+) + n H(+)(out). NDH shuttles electrons from NAD(P)H:plastoquinone, via FMN and iron-sulfur (Fe-S) centers, to quinones in the photosynthetic chain and possibly in a chloroplast respiratory chain. The immediate electron acceptor for the enzyme in this species is believed to be plastoquinone. Couples the redox reaction to proton translocation, and thus conserves the redox energy in a proton gradient. This chain is NAD(P)H-quinone oxidoreductase subunit 3, chloroplastic, found in Olimarabidopsis pumila (Dwarf rocket).